The following is a 1227-amino-acid chain: Anion exchange protein 3 (1227 aa).

The span at 1-11 (MANGVIPPPGG) shows a compositional bias: pro residues. Disordered regions lie at residues 1-256 (MANG…DEAE), 286-312 (KPSRIQGGRGSPSGLAPILRRKKKKKK), and 428-497 (NDDK…GDGH). Topologically, residues 1–707 (MANGVIPPPG…DLRDALHSQC (707 aa)) are cytoplasmic. A compositionally biased stretch (basic and acidic residues) spans 58-75 (DPEKPSRSYSERDFEFHR). Basic residues-rich tracts occupy residues 76–97 (HTSHHTHHPLSARLPPPHKLRR) and 104–113 (RHTRRKRKKE). Positions 134–152 (AEEEEEEEEEEEGESEAEP) are enriched in acidic residues. Phosphoserine is present on residues Ser-167, Ser-170, Ser-175, and Ser-198. Residues 194–215 (QSDQSPQRSGSSPSPRARASRI) are compositionally biased toward low complexity. Residue Arg-294 is modified to Omega-N-methylarginine. Positions 435–448 (FFPRNPSSSSVNSV) are enriched in low complexity. Basic and acidic residues predominate over residues 480-497 (HDPDAKEKPLHMPGGDGH). Transmembrane regions (helical) follow at residues 708–730 (VAAVLFIYFAALSPAITFGGLLG), 736–773 (LMGVSELIVSTAVLGVLFSLLGAQPLLVVGFSGPLLVF), 793–815 (VWVGLWLVVFVLALVAAEGSFLV), and 825–846 (IFAFLISLIFIYETFHKLYKVF). The interval 708 to 1227 (VAAVLFIYFA…DEYNELHMPV (520 aa)) is membrane (anion exchange). The N-linked (GlcNAc...) asparagine glycan is linked to Asn-868. The helical transmembrane segment at 888–905 (ALLSLILMLGTFLIAFFL) threads the bilayer. Residues 906 to 920 (RKFRNSRFLGGKARR) lie on the Cytoplasmic side of the membrane. A run of 5 helical transmembrane segments spans residues 921 to 941 (IIGDFGIPISILVMVLVDYSI), 975 to 997 (PFPPWMMVAAAVPALLVLILIFM), 1023 to 1044 (LLLIGSLGGLCGLFGLPWLTAA), 1078 to 1123 (VTGV…IQLS), and 1150 to 1186 (MHLFTCIQLGCIALLWVVKSTAASLAFPFLLLLTVPL). Residue Cys-1160 is the site of S-palmitoyl cysteine attachment.

The protein belongs to the anion exchanger (TC 2.A.31) family. As to expression, expressed in the brain.

The protein resides in the cell membrane. It carries out the reaction hydrogencarbonate(in) + chloride(out) = hydrogencarbonate(out) + chloride(in). Inhibited by 4,4'-diisothiocyanatostilbene-2,2'-disulfonic acid (DIDS). Sodium-independent anion exchanger which mediates the electroneutral exchange of chloride for bicarbonate ions across the cell membrane. May be involved in the regulation of intracellular pH, and the modulation of cardiac action potential. The sequence is that of Anion exchange protein 3 (Slc4a3) from Mus musculus (Mouse).